The primary structure comprises 348 residues: Chlorophyll(ide) b reductase NOL, chloroplastic (348 aa).

Residues 1-61 constitute a chloroplast transit peptide; that stretch reads MATWSGFNVS…TRQNLTVTPS (61 aa). Residue 84–108 coordinates NAD(+); it reads ITGSTKGIGYALAREFLKAGDNVVI. Y233 serves as the catalytic Proton acceptor.

Belongs to the short-chain dehydrogenases/reductases (SDR) family. In terms of assembly, interacts with NCY1 to form a complex that acts as a chlorophyll b reductase. Interacts with HCAR, RCCR and the LHCII complex. Part of a SGR1-CCE-LHCII complex, which acts in chlorophyll breakdown.

It is found in the plastid. Its subcellular location is the chloroplast thylakoid membrane. It carries out the reaction 7(1)-hydroxychlorophyllide a + NAD(+) = chlorophyllide b + NADH + H(+). It catalyses the reaction 7(1)-hydroxychlorophyllide a + NADP(+) = chlorophyllide b + NADPH + H(+). Functionally, required for chlorophyll b degradation. Chlorophyll b, chlorophyllide b, pheophorbide b and pheophytin b can be used as substrates. Belongs to the chlorophyll catabolic enzymes (CCEs). The protein is Chlorophyll(ide) b reductase NOL, chloroplastic (NOL) of Arabidopsis thaliana (Mouse-ear cress).